The following is an 841-amino-acid chain: Rhomboid-like protease 5 (841 aa).

Over residues 1–10 (MSSKGGSSRL) the composition is skewed to low complexity. Residues 1 to 289 (MSSKGGSSRL…GGDGGPRRHS (289 aa)) are disordered. The segment covering 11 to 51 (GSKDLKKMTSRTERELRDSGRVRGEVERVEKRLRATAKVKE) has biased composition (basic and acidic residues). The span at 95–132 (LRPASSSPRLASSSRPTESTLPSSSSRALQGASSSSSS) shows a compositional bias: low complexity. Basic and acidic residues-rich tracts occupy residues 154–163 (LRQEKKRLPE), 209–230 (RTAEKLEEGTASHRDGSRRGSV), and 243–275 (SSHEFESSPQREERMQPQETGRRELSSEPRSGD). 6 consecutive transmembrane segments (helical) span residues 323–343 (FLMIFLTSSVLFFVFLQELVL), 464–484 (MFRVVWGMFLHGGWMHLLLNV), 492–512 (WILEPAWGFLRTLSLWIVGGV), 526–546 (VTVGSSGAFYGLLGALVPFSI), 571–590 (FGNMVGVQGVDNNAHLGGLI), and 673–693 (FAAAVGLVTFWSVLWLYLLVP). Catalysis depends on S531, which acts as the Nucleophile. H585 is a catalytic residue.

The protein belongs to the peptidase S54 family.

The protein localises to the membrane. The enzyme catalyses Cleaves type-1 transmembrane domains using a catalytic dyad composed of serine and histidine that are contributed by different transmembrane domains.. Its function is as follows. Serine protease involved in intramembrane proteolysis. Cleaves microneme adhesins, such as MIC2. This step is essential for efficient invasion of host cells. Catalyzes intramembrane proteolysis of AMA1. This Toxoplasma gondii protein is Rhomboid-like protease 5 (ROM5).